Reading from the N-terminus, the 431-residue chain is NADH-quinone oxidoreductase chain 1 (431 aa).

54–63 contacts NAD(+); sequence GRGGAGFPTG. Residue 167-214 participates in FMN binding; the sequence is GAGAYICGEETALLESLEGKKGMPRMKPPFPAGAGLYGCPTTVNNVES. Residues Cys-346, Cys-349, Cys-352, and Cys-392 each contribute to the [4Fe-4S] cluster site.

This sequence belongs to the complex I 51 kDa subunit family. As to quaternary structure, NDH-1 is composed of at least 14 different subunits, Nqo1 to Nqo14. The complex has a L-shaped structure, with the hydrophobic arm (subunits Nqo7, Nqo8, Nqo10 to Nqo14) embedded in the inner membrane and the hydrophilic peripheral arm (subunits Nqo1 to Nqo6, Nqo9) protruding into the bacterial cytoplasm. The hydrophilic domain contains all the redox centers. FMN is required as a cofactor. The cofactor is [4Fe-4S] cluster.

The protein resides in the cell inner membrane. It catalyses the reaction a quinone + NADH + 5 H(+)(in) = a quinol + NAD(+) + 4 H(+)(out). In terms of biological role, NDH-1 shuttles electrons from NADH, via FMN and iron-sulfur (Fe-S) centers, to quinones in the respiratory chain. The immediate electron acceptor for the enzyme in this species is believed to be ubiquinone. Couples the redox reaction to proton translocation (for every two electrons transferred, four hydrogen ions are translocated across the cytoplasmic membrane), and thus conserves the redox energy in a proton gradient. The polypeptide is NADH-quinone oxidoreductase chain 1 (nqo1) (Paracoccus denitrificans).